A 387-amino-acid polypeptide reads, in one-letter code: Prostatic acid phosphatase (387 aa).

Residues 1 to 34 (MRNAALLMTRATSLRLSLLLLLSFLPDLDGGVRA) form the signal peptide. Position 45 (R45) interacts with substrate. H46 serves as the catalytic Nucleophile. R49 is a substrate binding site. A glycan (N-linked (GlcNAc...) asparagine) is linked at N96. R113 lines the substrate pocket. 3 disulfides stabilise this stretch: C163-C374, C217-C315, and C349-C353. An N-linked (GlcNAc...) asparagine glycan is attached at N222. H291 contacts substrate. D292 serves as the catalytic Proton donor. N-linked (GlcNAc...) asparagine glycosylation is present at N335.

It belongs to the histidine acid phosphatase family. Homodimer; dimer formation is required for phosphatase activity.

The protein localises to the secreted. The catalysed reaction is a phosphate monoester + H2O = an alcohol + phosphate. It catalyses the reaction 1-(9Z-octadecenoyl)-sn-glycero-3-phosphate + H2O = 1-(9Z-octadecenoyl)-sn-glycerol + phosphate. It carries out the reaction O-phospho-L-tyrosyl-[protein] + H2O = L-tyrosyl-[protein] + phosphate. In terms of biological role, a non-specific tyrosine phosphatase that dephosphorylates a diverse number of substrates under acidic conditions (pH 4-6) including alkyl, aryl, and acyl orthophosphate monoesters and phosphorylated proteins. Has lipid phosphatase activity and inactivates lysophosphatidic acid in seminal plasma. This chain is Prostatic acid phosphatase (ACP3), found in Bos taurus (Bovine).